Reading from the N-terminus, the 140-residue chain is L-fucose mutarotase (140 aa).

Histidine 22 (proton donor) is an active-site residue. Substrate is bound by residues aspartate 30, arginine 107, and 129-131 (YGN).

Belongs to the RbsD / FucU family. FucU mutarotase subfamily. In terms of assembly, homodecamer.

Its subcellular location is the cytoplasm. It carries out the reaction alpha-L-fucose = beta-L-fucose. Its pathway is carbohydrate metabolism; L-fucose metabolism. In terms of biological role, involved in the anomeric conversion of L-fucose. This Salmonella arizonae (strain ATCC BAA-731 / CDC346-86 / RSK2980) protein is L-fucose mutarotase.